A 257-amino-acid chain; its full sequence is MSDLKKAAQRAIELMDLTTLNDDDTAEKVIELCKKAVTPAGHTAAICIYPRFIPIARKTLIELDAEDIQIATVTNFPHGNDDIAIAVLETRAAVAYGADEVDVVFPYRALMEGDETVGFELVKACKEACGDDVLLKVIIESGELKDPALIRKASEISIDAGADFIKTSTGKVPVNATLEAAEIMLTVIAEKNRAVGFKPAGGVRDAAAAAEFLGTAARILGEDWVTPRTFRFGASSLLSSLLHTLELADAPKGAQGY.

The Proton donor/acceptor role is filled by aspartate 102. Lysine 166 functions as the Schiff-base intermediate with acetaldehyde in the catalytic mechanism. Lysine 198 (proton donor/acceptor) is an active-site residue.

Belongs to the DeoC/FbaB aldolase family. DeoC type 2 subfamily.

The protein resides in the cytoplasm. The catalysed reaction is 2-deoxy-D-ribose 5-phosphate = D-glyceraldehyde 3-phosphate + acetaldehyde. Its pathway is carbohydrate degradation; 2-deoxy-D-ribose 1-phosphate degradation; D-glyceraldehyde 3-phosphate and acetaldehyde from 2-deoxy-alpha-D-ribose 1-phosphate: step 2/2. Functionally, catalyzes a reversible aldol reaction between acetaldehyde and D-glyceraldehyde 3-phosphate to generate 2-deoxy-D-ribose 5-phosphate. This is Deoxyribose-phosphate aldolase from Shewanella amazonensis (strain ATCC BAA-1098 / SB2B).